Here is a 90-residue protein sequence, read N- to C-terminus: U7-theraphotoxin-Hhn1h (90 aa).

A signal peptide spans 1-19 (MKTAIFTVVLALAVFAVLS). Positions 20 to 50 (FGWEANEKALSEEFTELIHEKEAASETEARE) are excised as a propeptide. 3 cysteine pairs are disulfide-bonded: cysteine 51-cysteine 65, cysteine 58-cysteine 70, and cysteine 64-cysteine 81.

It belongs to the neurotoxin 10 (Hwtx-1) family. 13 (Hntx-13) subfamily. Expressed by the venom gland.

It localises to the secreted. Its function is as follows. Ion channel inhibitor. This chain is U7-theraphotoxin-Hhn1h, found in Cyriopagopus hainanus (Chinese bird spider).